We begin with the raw amino-acid sequence, 767 residues long: Probable beta-glucosidase K (767 aa).

N-linked (GlcNAc...) asparagine glycosylation is present at Asn19. The active site involves Asp232. N-linked (GlcNAc...) asparagine glycans are attached at residues Asn324, Asn477, and Asn749. Positions 405–552 (EGQPGLRMRF…DPERAIARAV (148 aa)) constitute a PA14 domain. The segment at 727–767 (LGRRGRSGSSPAVYRGRSNNVVNRTSHQGAQRISKGGFAAR) is disordered. Over residues 743–757 (RSNNVVNRTSHQGAQ) the composition is skewed to polar residues.

It belongs to the glycosyl hydrolase 3 family.

It localises to the secreted. The enzyme catalyses Hydrolysis of terminal, non-reducing beta-D-glucosyl residues with release of beta-D-glucose.. It functions in the pathway glycan metabolism; cellulose degradation. Beta-glucosidases are one of a number of cellulolytic enzymes involved in the degradation of cellulosic biomass. Catalyzes the last step releasing glucose from the inhibitory cellobiose. In Aspergillus fumigatus (strain ATCC MYA-4609 / CBS 101355 / FGSC A1100 / Af293) (Neosartorya fumigata), this protein is Probable beta-glucosidase K (bglK).